Consider the following 238-residue polypeptide: Small ribosomal subunit protein uS2 (238 aa).

It belongs to the universal ribosomal protein uS2 family.

The polypeptide is Small ribosomal subunit protein uS2 (Prochlorococcus marinus (strain MIT 9211)).